We begin with the raw amino-acid sequence, 670 residues long: Probable leucine-rich repeat receptor-like protein kinase At1g68400 (670 aa).

The first 29 residues, Met-1–Ser-29, serve as a signal peptide directing secretion. Residues Thr-30–Thr-274 are Extracellular-facing. 5 N-linked (GlcNAc...) asparagine glycosylation sites follow: Asn-52, Asn-79, Asn-102, Asn-109, and Asn-112. 6 LRR repeats span residues Arg-69 to Thr-91, Ser-92 to Thr-114, Ala-115 to Leu-137, Arg-139 to Thr-162, His-163 to Asp-185, and Leu-186 to Phe-207. N-linked (GlcNAc...) asparagine glycans are attached at residues Asn-149, Asn-182, and Asn-190. Residues Ser-230–Ser-266 form a disordered region. A compositionally biased stretch (polar residues) spans Val-253–Ser-266. A glycan (N-linked (GlcNAc...) asparagine) is linked at Asn-268. Residues Ile-275–Leu-295 traverse the membrane as a helical segment. Residues Tyr-296–Gln-670 are Cytoplasmic-facing. The Protein kinase domain occupies Arg-362 to Ile-636. Ser-364 carries the phosphoserine modification. Residues Leu-368–Ala-376 and Lys-390 contribute to the ATP site. Ser-443 is subject to Phosphoserine. Thr-463 carries the phosphothreonine modification. Asp-491 serves as the catalytic Proton acceptor. At Thr-616 the chain carries Phosphothreonine.

Belongs to the protein kinase superfamily. Ser/Thr protein kinase family.

It localises to the cell membrane. It catalyses the reaction L-seryl-[protein] + ATP = O-phospho-L-seryl-[protein] + ADP + H(+). The enzyme catalyses L-threonyl-[protein] + ATP = O-phospho-L-threonyl-[protein] + ADP + H(+). In Arabidopsis thaliana (Mouse-ear cress), this protein is Probable leucine-rich repeat receptor-like protein kinase At1g68400.